We begin with the raw amino-acid sequence, 540 residues long: Light-independent protochlorophyllide reductase subunit B (540 aa).

A [4Fe-4S] cluster-binding site is contributed by aspartate 36. The active-site Proton donor is aspartate 292. 428–429 (GL) serves as a coordination point for substrate. Positions 451–490 (SNVASGVEPSTPSVSSEVSASSSASPEASAPTPSPDGDMV) are disordered. A compositionally biased stretch (low complexity) spans 457-481 (VEPSTPSVSSEVSASSSASPEASAP).

This sequence belongs to the ChlB/BchB/BchZ family. As to quaternary structure, protochlorophyllide reductase is composed of three subunits; BchL, BchN and BchB. Forms a heterotetramer of two BchB and two BchN subunits. The cofactor is [4Fe-4S] cluster.

The enzyme catalyses chlorophyllide a + oxidized 2[4Fe-4S]-[ferredoxin] + 2 ADP + 2 phosphate = protochlorophyllide a + reduced 2[4Fe-4S]-[ferredoxin] + 2 ATP + 2 H2O. It functions in the pathway porphyrin-containing compound metabolism; bacteriochlorophyll biosynthesis (light-independent). Component of the dark-operative protochlorophyllide reductase (DPOR) that uses Mg-ATP and reduced ferredoxin to reduce ring D of protochlorophyllide (Pchlide) to form chlorophyllide a (Chlide). This reaction is light-independent. The NB-protein (BchN-BchB) is the catalytic component of the complex. In Chlorobium chlorochromatii (strain CaD3), this protein is Light-independent protochlorophyllide reductase subunit B.